A 131-amino-acid polypeptide reads, in one-letter code: Small ribosomal subunit protein uS11 (131 aa).

This sequence belongs to the universal ribosomal protein uS11 family. Part of the 30S ribosomal subunit. Interacts with proteins S7 and S18. Binds to IF-3.

Functionally, located on the platform of the 30S subunit, it bridges several disparate RNA helices of the 16S rRNA. Forms part of the Shine-Dalgarno cleft in the 70S ribosome. The polypeptide is Small ribosomal subunit protein uS11 (Thermotoga neapolitana (strain ATCC 49049 / DSM 4359 / NBRC 107923 / NS-E)).